An 827-amino-acid chain; its full sequence is Cytosolic Fe-S cluster assembly factor NAR1 (827 aa).

Cys-22 contacts [4Fe-4S] cluster. Residues 57-77 are disordered; that stretch reads AYYESSTPPSSSLSAADSRPR. The span at 61 to 73 shows a compositional bias: low complexity; sequence SSTPPSSSLSAAD. [4Fe-4S] cluster-binding residues include Cys-92, Cys-95, and Cys-98. The tract at residues 209–231 is disordered; that stretch reads RENARKRAKLSNAPADDDDRLHP. Positions 246, 307, 591, and 595 each coordinate [4Fe-4S] cluster. Disordered stretches follow at residues 599 to 637 and 709 to 739; these read GGQI…WAAD and DQGG…NAKS. Composition is skewed to polar residues over residues 604-621 and 713-738; these read PPTQ…TVDN and ANDS…SNAK.

The protein belongs to the NARF family.

Functionally, component of the cytosolic Fe/S protein assembly machinery. Required for maturation of extramitochondrial Fe/S proteins. May play a role in the transfer of pre-assembled Fe/S clusters to target apoproteins. The sequence is that of Cytosolic Fe-S cluster assembly factor NAR1 (NAR1) from Mycosarcoma maydis (Corn smut fungus).